The chain runs to 290 residues: Glutamate racemase (290 aa).

Substrate is bound by residues 32-33 (DS) and 64-65 (YG). C96 acts as the Proton donor/acceptor in catalysis. 97 to 98 (NT) contributes to the substrate binding site. C208 acts as the Proton donor/acceptor in catalysis. 209-210 (TH) lines the substrate pocket.

This sequence belongs to the aspartate/glutamate racemases family.

It carries out the reaction L-glutamate = D-glutamate. It participates in cell wall biogenesis; peptidoglycan biosynthesis. In terms of biological role, provides the (R)-glutamate required for cell wall biosynthesis. The sequence is that of Glutamate racemase from Sodalis glossinidius (strain morsitans).